We begin with the raw amino-acid sequence, 346 residues long: Phosphoribosylformylglycinamidine cyclo-ligase (346 aa).

Belongs to the AIR synthase family.

The protein localises to the cytoplasm. It catalyses the reaction 2-formamido-N(1)-(5-O-phospho-beta-D-ribosyl)acetamidine + ATP = 5-amino-1-(5-phospho-beta-D-ribosyl)imidazole + ADP + phosphate + H(+). It participates in purine metabolism; IMP biosynthesis via de novo pathway; 5-amino-1-(5-phospho-D-ribosyl)imidazole from N(2)-formyl-N(1)-(5-phospho-D-ribosyl)glycinamide: step 2/2. The protein is Phosphoribosylformylglycinamidine cyclo-ligase of Vibrio vulnificus (strain YJ016).